The primary structure comprises 266 residues: Putative pyruvate, phosphate dikinase regulatory protein (266 aa).

149-156 (GVSRTSKT) is a binding site for ADP.

The protein belongs to the pyruvate, phosphate/water dikinase regulatory protein family. PDRP subfamily.

The catalysed reaction is N(tele)-phospho-L-histidyl/L-threonyl-[pyruvate, phosphate dikinase] + ADP = N(tele)-phospho-L-histidyl/O-phospho-L-threonyl-[pyruvate, phosphate dikinase] + AMP + H(+). It catalyses the reaction N(tele)-phospho-L-histidyl/O-phospho-L-threonyl-[pyruvate, phosphate dikinase] + phosphate + H(+) = N(tele)-phospho-L-histidyl/L-threonyl-[pyruvate, phosphate dikinase] + diphosphate. Functionally, bifunctional serine/threonine kinase and phosphorylase involved in the regulation of the pyruvate, phosphate dikinase (PPDK) by catalyzing its phosphorylation/dephosphorylation. The sequence is that of Putative pyruvate, phosphate dikinase regulatory protein from Geobacillus kaustophilus (strain HTA426).